A 321-amino-acid chain; its full sequence is Oxidoreductase P35 (321 aa).

The protein belongs to the Gfo/Idh/MocA family.

It is found in the cell surface. In terms of biological role, oxidoreductase that may be involved in ulvan degradation. Ulvan is the main polysaccharide component of the Ulvales (green seaweed) cell wall. It is composed of disaccharide building blocks comprising 3-sulfated rhamnose (Rha3S) linked to D-glucuronic acid (GlcA), L-iduronic acid (IduA), or D-xylose (Xyl). This Formosa agariphila (strain DSM 15362 / KCTC 12365 / LMG 23005 / KMM 3901 / M-2Alg 35-1) protein is Oxidoreductase P35.